Reading from the N-terminus, the 740-residue chain is F-BAR and double SH3 domains protein 2 (740 aa).

An F-BAR domain is found at 8–282; that stretch reads VKVTQELRNI…NSSKVVRDYN (275 aa). Residues 303 to 323 are disordered; that stretch reads PCDSDTSRQLESETGTTEEHS. Positions 307-323 are enriched in basic and acidic residues; the sequence is DTSRQLESETGTTEEHS. Residues 356–397 adopt a coiled-coil conformation; the sequence is GVALSEQSRAELEQKIDEARESIRKAEIIKLKAEARLDLLKQ. SH3 domains lie at 469–530 and 567–629; these read NYPL…FPTS and ASVC…ELSA. The tract at residues 567 to 629 is required and sufficient for location at clathrin-coated pits; it reads ASVCFVKALY…PSVLVEELSA (63 aa). Over residues 629 to 645 the composition is skewed to polar residues; sequence ASENGDTPWTREIQISP. The disordered stretch occupies residues 629–740; that stretch reads ASENGDTPWT…KMEDVEITLV (112 aa). Residues 646 to 657 are compositionally biased toward pro residues; sequence SPKPHTSLPPLP. 2 positions are modified to phosphoserine: Ser675 and Ser681. Residues 675-706 are compositionally biased toward polar residues; it reads SQFFPRSPSANENSLHAESPGFSQASRQTPDT.

In terms of assembly, homodimer. Interacts (via SH3 domain 2) with ITSN1 (via SH3 domain 4). Recruited to clathrin-coated pits during a mid-to-late stage of assembly via interaction with ITSN1. Interacts (via SH3 domain 1) with WASL. Interacts with WAS. Interacts with CASK and MAGI1. CASK inhibits interaction with MAGI1. Phosphorylated. Phosphorylation on a Ser residue is important for recruitment to the cell membrane and for its role in promoting endocytosis. As to expression, detected in inner ear vestibula and in stereocilia in cochlear hair cell bundles (at protein level). Ubiquitous. Detected in testis, liver, brain cortex, cerebellum, kidney, organ of Corti, utricle, spiral ganglion, tongue and eye.

Its subcellular location is the cytoplasm. It localises to the cell junction. The protein localises to the membrane. It is found in the clathrin-coated pit. The protein resides in the cell membrane. Its subcellular location is the cell projection. It localises to the stereocilium. Adapter protein that plays a role in endocytosis via clathrin-coated pits. Contributes to the internalization of cell surface receptors, such as integrin ITGB1 and transferrin receptor. Promotes endocytosis of EGFR in cancer cells, and thereby contributes to the down-regulation of EGFR signaling. Recruited to clathrin-coated pits during a mid-to-late stage of assembly, where it is required for normal progress from U-shaped intermediate stage pits to terminal, omega-shaped pits. Binds to membranes enriched in phosphatidylinositol 3,4-bisphosphate or phosphatidylinositol 3,4,5-trisphosphate. When bound to membranes, promotes actin polymerization via its interaction with WAS and/or WASL which leads to the activation of the Arp2/3 complex. Does not promote actin polymerisation in the absence of membranes. The chain is F-BAR and double SH3 domains protein 2 (Fchsd2) from Mus musculus (Mouse).